A 270-amino-acid polypeptide reads, in one-letter code: Monofunctional glycosyltransferase (270 aa).

Positions 1–35 are disordered; sequence MKRSDRYKTYNKPNDSNDSNQLHHNTYFKPVNKPQ. Positions 11-24 are enriched in polar residues; that stretch reads NKPNDSNDSNQLHH. Residues 47–67 form a helical membrane-spanning segment; it reads LLIPILIIIGIIIGVMYALSL.

Belongs to the glycosyltransferase 51 family.

The protein resides in the cell membrane. The catalysed reaction is [GlcNAc-(1-&gt;4)-Mur2Ac(oyl-L-Ala-gamma-D-Glu-L-Lys-D-Ala-D-Ala)](n)-di-trans,octa-cis-undecaprenyl diphosphate + beta-D-GlcNAc-(1-&gt;4)-Mur2Ac(oyl-L-Ala-gamma-D-Glu-L-Lys-D-Ala-D-Ala)-di-trans,octa-cis-undecaprenyl diphosphate = [GlcNAc-(1-&gt;4)-Mur2Ac(oyl-L-Ala-gamma-D-Glu-L-Lys-D-Ala-D-Ala)](n+1)-di-trans,octa-cis-undecaprenyl diphosphate + di-trans,octa-cis-undecaprenyl diphosphate + H(+). Its pathway is cell wall biogenesis; peptidoglycan biosynthesis. Peptidoglycan polymerase that catalyzes glycan chain elongation using lipid-linked disaccharide-pentapeptide as the substrate. In Staphylococcus saprophyticus subsp. saprophyticus (strain ATCC 15305 / DSM 20229 / NCIMB 8711 / NCTC 7292 / S-41), this protein is Monofunctional glycosyltransferase.